Consider the following 129-residue polypeptide: Sulfurtransferase TusD (129 aa).

Cys-79 functions as the Cysteine persulfide intermediate in the catalytic mechanism.

Belongs to the DsrE/TusD family. In terms of assembly, heterohexamer, formed by a dimer of trimers. The hexameric TusBCD complex contains 2 copies each of TusB, TusC and TusD. The TusBCD complex interacts with TusE.

The protein resides in the cytoplasm. Part of a sulfur-relay system required for 2-thiolation of 5-methylaminomethyl-2-thiouridine (mnm(5)s(2)U) at tRNA wobble positions. Accepts sulfur from TusA and transfers it in turn to TusE. The protein is Sulfurtransferase TusD of Pectobacterium carotovorum subsp. carotovorum (strain PC1).